Consider the following 5061-residue polypeptide: E3 ubiquitin-protein ligase rnf213-beta (5061 aa).

Residues 1–12 (MTRKRKSGKKGK) are compositionally biased toward basic residues. Residues 1–334 (MTRKRKSGKK…QRKPSPVRAP (334 aa)) are disordered. 2 stretches are compositionally biased toward polar residues: residues 24–52 (GGSTSSSTTQKEGAQKGDGSSSSSTTQKD) and 75–87 (SDGSTSSSTTNKE). The span at 100 to 110 (LQKKGPQKRKG) shows a compositional bias: basic residues. Composition is skewed to polar residues over residues 127–163 (QTSYPSQARSRSHGQHNISTTESGPLSKEAQTQTSAS) and 172–200 (TETVGQASQQTQTEINGNTETAEVSQPPQ). Basic and acidic residues-rich tracts occupy residues 217–229 (KGSESDGEKEESV) and 236–289 (LSEI…EEPK). Residues 292–301 (AAAAATGKTG) are compositionally biased toward low complexity. Polar residues predominate over residues 306–322 (EQTNQIEANQDSTMESK). ATP-binding positions include 1923-1928 (AVGKSL), Glu-2023, Asp-2074, Lys-2417, and Ser-2492. Zn(2+) contacts are provided by Cys-3957, Cys-3960, Cys-3972, His-3974, Cys-3977, Cys-3980, Cys-3993, Cys-3996, Cys-4451, and His-4455. The RING-type zinc-finger motif lies at 3957–3997 (CRVCLMELSEPFALPCEHVFCRSCLRRSMEREEAQHCPVCR). The RZ-type zinc finger occupies 4429–4501 (MPDDHTSEAK…AYGDYDRTRP (73 aa)). Cys-4462 functions as the Nucleophile; for E3 ubiquitin-lipopolysaccharide ligase activity in the catalytic mechanism. The Zn(2+) site is built by Cys-4471 and Cys-4474.

It belongs to the AAA ATPase family.

The protein resides in the cytoplasm. It is found in the cytosol. Its subcellular location is the lipid droplet. It carries out the reaction S-ubiquitinyl-[E2 ubiquitin-conjugating enzyme]-L-cysteine + [acceptor protein]-L-lysine = [E2 ubiquitin-conjugating enzyme]-L-cysteine + N(6)-ubiquitinyl-[acceptor protein]-L-lysine.. It catalyses the reaction ATP + H2O = ADP + phosphate + H(+). It functions in the pathway protein modification; protein ubiquitination. Functionally, atypical E3 ubiquitin ligase that can catalyze ubiquitination of both proteins and lipids, and which is involved in various processes, such as lipid metabolism, angiogenesis and cell-autonomous immunity. Acts as a key immune sensor by catalyzing ubiquitination of the lipid A moiety of bacterial lipopolysaccharide (LPS) via its RZ-type zinc-finger: restricts the proliferation of cytosolic bacteria, such as Salmonella, by generating the bacterial ubiquitin coat through the ubiquitination of LPS. Ubiquitination of LPS triggers cell-autonomous immunity, such as antibacterial autophagy, leading to degradation of the microbial invader. Involved in lipid metabolism by regulating fat storage and lipid droplet formation; act by inhibiting the lipolytic process. Also regulates lipotoxicity by inhibiting desaturation of fatty acids. Also acts as an E3 ubiquitin-protein ligase via its RING-type zinc finger. Involved in the non-canonical Wnt signaling pathway in vascular development: acts by mediating ubiquitination and degradation of proteins downstream of rspo3, leading to inhibit the non-canonical Wnt signaling pathway and promoting vessel regression. Also has ATPase activity; ATPase activity is required for ubiquitination of LPS. This chain is E3 ubiquitin-protein ligase rnf213-beta (rnf213b), found in Danio rerio (Zebrafish).